The chain runs to 502 residues: MQNDGTFDPEASYDAVLVGAGIMSATLAALLHELDPQLRLLLVERLEAPALESSAAVNNAGTGHAANCELNYTPMQPNGRVATDKAVAINAAFERSLEFWGSLLERGRLTSTDFLHRAAHISAVWSPANIAFLRQRFEQLKDIPAFAEMRWTEDRQDLAEWMPLVMEGRDPNQAVAATRIERGTDVDFGALTRAYLLPLQSSGALTVQYGTEVSNLKRLRRPNMTEGDWRVITKGPSGRREVRAPFVFLGAGGGALPLLQRSGIPEGDDFAGFPVSGLWLVCNDADLAEQQRAKVYGKAAVGAPPMSVPHLDTRWMDGRRSLLFGPFAGFSSKFLKQGSLLDLPASVRPTNLLPMLQVGATNIELVRYLINQLRQTPDQRFDALRDFLPTARQDDWSLSVAGQRVQIIKRSKEGGRLQLGTEVVAASDGSLAALLGASPGASTAVTIMLEVLQRCFPERLASADWQARLKALLPSFYSDPKSDPDVLKGMRERSDGLLGLSR.

Belongs to the MQO family. The cofactor is FAD.

It catalyses the reaction (S)-malate + a quinone = a quinol + oxaloacetate. It participates in carbohydrate metabolism; tricarboxylic acid cycle; oxaloacetate from (S)-malate (quinone route): step 1/1. The sequence is that of Probable malate:quinone oxidoreductase from Synechococcus sp. (strain CC9902).